Reading from the N-terminus, the 108-residue chain is Cell division topological specificity factor (108 aa).

The protein belongs to the MinE family.

In terms of biological role, prevents the cell division inhibition by proteins MinC and MinD at internal division sites while permitting inhibition at polar sites. This ensures cell division at the proper site by restricting the formation of a division septum at the midpoint of the long axis of the cell. The sequence is that of Cell division topological specificity factor from Prochlorococcus marinus (strain MIT 9215).